Reading from the N-terminus, the 610-residue chain is Solute carrier family 23 member 3 (610 aa).

Polar residues predominate over residues 1-16; the sequence is MSRSPLNPSQLRSVGS. Positions 1-32 are disordered; it reads MSRSPLNPSQLRSVGSQDALAPLPPPAPQNPS. At 1–49 the chain is on the cytoplasmic side; the sequence is MSRSPLNPSQLRSVGSQDALAPLPPPAPQNPSTHSWDPLCGSLPWGLSC. Residues 50-70 traverse the membrane as a helical segment; the sequence is LLALQHVLVMASLLCVSHLLL. Over 71 to 85 the chain is Extracellular; it reads LCSLSPGGLSYSPSQ. A helical membrane pass occupies residues 86–106; the sequence is LLASSFFSCGMSTILQTWMGS. The Cytoplasmic portion of the chain corresponds to 107–164; it reads RLPLVQAPSLEFLIPALVLTSQKLPRAIQTPGNSSLMLHLCRGPSCHGLGHWNTSLQE. Residues 165-185 traverse the membrane as a helical segment; it reads VSGAVVVSGLLQGMMGLLGSP. Residues 186–187 are Extracellular-facing; it reads GH. Residues 188–208 form a helical membrane-spanning segment; the sequence is VFPHCGPLVLAPSLVVAGLSA. At 209 to 211 the chain is on the cytoplasmic side; the sequence is HRE. Residues 212 to 232 form a helical membrane-spanning segment; sequence VAQFCFTHWGLALLVILLMVV. At 233–266 the chain is on the extracellular side; that stretch reads CSQHLGSCQFHVCPWRRASTSSTHTPLPVFRLLS. The helical transmembrane segment at 267-287 threads the bilayer; the sequence is VLIPVACVWIVSAFVGFSVIP. The Cytoplasmic portion of the chain corresponds to 288–316; sequence QELSAPTKAPWIWLPHPGEWNWPLLTPRA. The chain crosses the membrane as a helical span at residues 317 to 337; the sequence is LAAGISMALAASTSSLGCYAL. At 338–355 the chain is on the extracellular side; that stretch reads CGRLLHLPPPPPHACSRG. A helical transmembrane segment spans residues 356 to 376; the sequence is LSLEGLGSVLAGLLGSPMGTA. The Cytoplasmic portion of the chain corresponds to 377 to 394; the sequence is SSFPNVGKVGLIQAGSQQ. Residues 395-414 traverse the membrane as a helical segment; it reads VAHLVGLLCVGLGLSPRLAQ. Topologically, residues 415–423 are extracellular; that stretch reads LLTTIPLPV. A helical transmembrane segment spans residues 424–446; it reads VGGVLGVTQAVVLSAGFSSFYLA. The Cytoplasmic portion of the chain corresponds to 447–452; it reads DIDSGR. A helical transmembrane segment spans residues 453-472; sequence NIFIVGFSIFMALLLPRWFR. At 473–486 the chain is on the extracellular side; sequence EAPVLFSTGWSPLD. A helical transmembrane segment spans residues 487-507; sequence VLLHSLLTQPIFLAGLSGFLL. Over 508-610 the chain is Cytoplasmic; it reads ENTIPGTQLE…SSREGFRSQK (103 aa). Residues 571-610 are disordered; the sequence is PEDPGDEEGGSSEPEEMADLLPGSGEPCPESSREGFRSQK. Over residues 573–588 the composition is skewed to acidic residues; it reads DPGDEEGGSSEPEEMA. Basic and acidic residues predominate over residues 601 to 610; the sequence is SSREGFRSQK.

This sequence belongs to the nucleobase:cation symporter-2 (NCS2) (TC 2.A.40) family.

The protein localises to the membrane. The catalysed reaction is hypoxanthine(out) + Na(+)(out) = hypoxanthine(in) + Na(+)(in). Its function is as follows. Acts as a sodium-dependent hypoxanthine transporter. May show xanthine-hypoxanthine exchange activity. The protein is Solute carrier family 23 member 3 (SLC23A3) of Homo sapiens (Human).